A 329-amino-acid polypeptide reads, in one-letter code: Eukaryotic translation initiation factor 2 subunit 1 (329 aa).

The S1 motif domain occupies 24 to 95; the sequence is DDLIMVKVNR…QKGYIDLSKR (72 aa). A Phosphoserine; by eIK1, eIK2 and PK4 modification is found at Ser59. The interval 291-329 is disordered; that stretch reads LDKHDGISSDDDDYNTSDEDDENSSEEDENTSEDEEEED. Acidic residues predominate over residues 298–329; sequence SSDDDDYNTSDEDDENSSEEDENTSEDEEEED.

It belongs to the eIF-2-alpha family. In terms of processing, phosphorylated at Ser-59 by eIK1 in response to amino acid starvation. Phosphorylates at Ser-59 in schizonts and gametocytes but not in rings and young trophozoites. Phosphorylates at Ser-59 by eIK2 in salivary gland sporozoites but not in midgut and hemocoel sporozoites. Dephosphorylated at Ser-59 by UIS2. Phosphorylation of eIF2alpha subunit of the pre-initiation complex eIF2 inhibits recycling of inactive eIF2-GDP to active eIF2-GTP by limiting the activity of the guanine nucleotide exchange factor eIF2B and thus, inhibits protein translation.

It is found in the cytoplasm. The protein resides in the stress granule. Functions in the early steps of protein synthesis by forming a ternary complex with GTP and initiator tRNA. May regulate protein translation in response to amino acid starvation. May regulate protein at various stages of parasite development. In Plasmodium falciparum (isolate 3D7), this protein is Eukaryotic translation initiation factor 2 subunit 1.